The following is a 57-amino-acid chain: Small hydrophobic protein (57 aa).

At Met1–Leu8 the chain is on the virion surface side. Residues Tyr9 to Ile29 form a helical membrane-spanning segment. At Leu30 to Leu57 the chain is on the intravirion side.

The protein belongs to the rubulavirus small hydrophobic protein family. As to quaternary structure, interacts with host TNFRSF1A, RIPK1 and IRAK1; these interactions interfere with host NF-kappa-B activation at the level of receptor complexes. Interacts with host protein UBQLN4.

The protein localises to the virion membrane. It localises to the host cell membrane. Its function is as follows. Plays a role in the inhibition of the host NF-kappa-B pathway. This inhibition occurs at the receptor level, by preventing the signaling of TNFR1 as well as IL-1R and TLR3. In Mumps virus genotype A (strain Jeryl-Lynn) (MuV), this protein is Small hydrophobic protein (SH).